Consider the following 736-residue polypeptide: Transcription regulator protein BACH1 (736 aa).

The BTB domain occupies 34–100 (CDVTIFVEGQ…AYTAKLILSK (67 aa)). Residue Ser-196 is modified to Phosphoserine. A compositionally biased stretch (basic and acidic residues) spans 286–295 (MEPEETKKDP). 2 disordered regions span residues 286 to 312 (MEPE…FPHN) and 349 to 389 (KPLS…RSSV). Phosphoserine is present on residues Ser-364 and Ser-445. Residues 557-620 (CIHDIRRRSK…GETKQNLTGL (64 aa)) enclose the bZIP domain. The interval 562-578 (RRRSKNRIAAQRCRKRK) is basic motif. The tract at residues 582-589 (IQNLESEI) is leucine-zipper. Positions 680–719 (LPPCARGNSEPGYARGQESQQMSTATSEQAGPAEQCRQSG) are disordered. The span at 696-708 (QESQQMSTATSEQ) shows a compositional bias: polar residues.

The protein belongs to the bZIP family. CNC subfamily. Heterodimer of BACH1 and MAFK. In terms of processing, ubiquitinated by the SCF(FBXL17) complex or by the by the SCF(FBXO22) complex, leading to its degradation by the proteasome. Under oxidative stress, reactive oxygen species covalently modify cysteine residues on the bZIP domain of BACH1 and release it from chromatin. If the BTB domain of BACH1 remains intact, its beta1-alpha6 degron is recognized by FBXO22, promoting its ubiquitination and degradation. If the structural integrity of the beta1-alpha6 degron is compromised, FBXL17 will transiently associate with the BACH1 BTB dimer and remodel it into stably bound monomer for ubiquitination and degradation.

It localises to the nucleus. Functionally, transcriptional regulator that acts as a repressor or activator, depending on the context. Binds to NF-E2 DNA binding sites. Plays important roles in coordinating transcription activation and repression by MAFK. Together with MAF, represses the transcription of genes under the control of the NFE2L2 oxidative stress pathway. The sequence is that of Transcription regulator protein BACH1 from Homo sapiens (Human).